The primary structure comprises 520 residues: 2-isopropylmalate synthase (520 aa).

In terms of domain architecture, Pyruvate carboxyltransferase spans 12–274; the sequence is VIIFDTTLRD…WNKIDTTQLT (263 aa). 4 residues coordinate Mn(2+): Asp21, His209, His211, and Asn245. A regulatory domain region spans residues 398–520; the sequence is KLTSLTVIAG…RDTVTTAAAS (123 aa).

The protein belongs to the alpha-IPM synthase/homocitrate synthase family. LeuA type 1 subfamily. Homodimer. The cofactor is Mn(2+).

The protein resides in the cytoplasm. It catalyses the reaction 3-methyl-2-oxobutanoate + acetyl-CoA + H2O = (2S)-2-isopropylmalate + CoA + H(+). It functions in the pathway amino-acid biosynthesis; L-leucine biosynthesis; L-leucine from 3-methyl-2-oxobutanoate: step 1/4. Its function is as follows. Catalyzes the condensation of the acetyl group of acetyl-CoA with 3-methyl-2-oxobutanoate (2-ketoisovalerate) to form 3-carboxy-3-hydroxy-4-methylpentanoate (2-isopropylmalate). This Bradyrhizobium diazoefficiens (strain JCM 10833 / BCRC 13528 / IAM 13628 / NBRC 14792 / USDA 110) protein is 2-isopropylmalate synthase.